A 709-amino-acid polypeptide reads, in one-letter code: Elongation factor G (709 aa).

In terms of domain architecture, tr-type G spans Ala9 to Thr292. GTP-binding positions include Ala18–Thr25, Asp89–His93, and Asn143–Asp146.

It belongs to the TRAFAC class translation factor GTPase superfamily. Classic translation factor GTPase family. EF-G/EF-2 subfamily.

The protein localises to the cytoplasm. In terms of biological role, catalyzes the GTP-dependent ribosomal translocation step during translation elongation. During this step, the ribosome changes from the pre-translocational (PRE) to the post-translocational (POST) state as the newly formed A-site-bound peptidyl-tRNA and P-site-bound deacylated tRNA move to the P and E sites, respectively. Catalyzes the coordinated movement of the two tRNA molecules, the mRNA and conformational changes in the ribosome. The polypeptide is Elongation factor G (Blochmanniella floridana).